The following is a 1832-amino-acid chain: Zinc finger SWIM domain-containing protein 8 (1832 aa).

3 positions are modified to phosphoserine: Ser36, Ser48, and Ser53. Residues 45-67 (RKQSAGPNSPTGGGGGGGSGGTR) are disordered. Residues 55 to 65 (TGGGGGGGSGG) show a composition bias toward gly residues. The SWIM-type zinc finger occupies 172 to 208 (YNVAVMFDRCRVTSCSCTCGAGAKWCTHVVALCLFRI). Ser437 and Ser564 each carry phosphoserine. Disordered stretches follow at residues 516-722 (PGAS…VGEE), 800-821 (NPPD…VSTS), and 1018-1216 (SQTH…TVDV). Over residues 563 to 572 (LSAEGGDKAL) the composition is skewed to basic and acidic residues. The segment covering 1021–1042 (HKPQTLSSFYSSSRPATANQRS) has biased composition (polar residues). The segment covering 1121-1132 (SRGGYNGRGWGS) has biased composition (gly residues). The residue at position 1141 (Thr1141) is a Phosphothreonine. Positions 1146-1161 (IDSSAPETTSDSSPTL) are enriched in polar residues. Phosphoserine occurs at positions 1155, 1158, and 1162. Over residues 1176–1211 (GRGQDSDSISSSSSDSLGSSSSSGSRRASASGGARA) the composition is skewed to low complexity. Residue Ser1270 is modified to Phosphoserine. Residues 1435–1446 (STAREGATSCSG) show a composition bias toward polar residues. The segment at 1435–1465 (STAREGATSCSGSGMRAAGEAGRGLPEGRGA) is disordered. Gly residues predominate over residues 1455–1465 (AGRGLPEGRGA). Ser1831 bears the Phosphoserine mark.

It belongs to the ZSWIM8 family. Component of the SCF-like E3 ubiquitin-protein ligase complex which contains CUL3, RBX1, ELOB, ELOC and ZSWIM8. Interacts with DAB1.

The protein resides in the cytoplasm. The protein localises to the cytosol. Its pathway is protein modification; protein ubiquitination. Functionally, substrate recognition component of a SCF-like E3 ubiquitin-protein ligase complex that promotes target-directed microRNA degradation (TDMD), a process that mediates degradation of microRNAs (miRNAs). The SCF-like E3 ubiquitin-protein ligase complex acts by catalyzing ubiquitination and subsequent degradation of AGO proteins (AGO1, AGO2, AGO3 and/or AGO4), thereby exposing miRNAs for degradation. Specifically recognizes and binds AGO proteins when they are engaged with a TDMD target. May also acts as a regulator of axon guidance: specifically recognizes misfolded ROBO3 and promotes its ubiquitination and subsequent degradation. Plays an essential role for proper embryonic development of heart and lung. Controls protein quality of DAB1, a key signal molecule for brain development, thus protecting its signaling strength. Mechanistically, recognizes intrinsically disordered regions of DAB1 and eliminates misfolded DAB1 that cannot be properly phosphorylated. The protein is Zinc finger SWIM domain-containing protein 8 of Mus musculus (Mouse).